The sequence spans 694 residues: Phosphatase and actin regulator 4-A (694 aa).

2 stretches are compositionally biased toward basic and acidic residues: residues 1–13 and 46–72; these read MEDR…DHSE and SSDS…ELIK. Disordered stretches follow at residues 1–29, 42–169, 192–403, 426–445, and 450–572; these read MEDR…KSKF, RKRK…QPLP, VNEV…HIRI, LFMQ…RSLP, and LLKV…QIRQ. The stretch at 55–80 is one RPEL 1 repeat; it reads EVLERKISTRKPREELIKRGLLVEVP. Polar residues predominate over residues 240–267; that stretch reads SISTSVTQESAVAGQKSDSSNRLQSSAP. Residues 300–317 show a composition bias toward low complexity; that stretch reads AELSLALAGSPLSPAGSR. Composition is skewed to pro residues over residues 318 to 327 and 372 to 381; these read PSPPLPPKRA and SNPPVPPLTL. Composition is skewed to acidic residues over residues 455-467, 499-511, and 519-529; these read DDED…DESL, QEEE…DTDS, and DDEEEEEEEET. RPEL repeat units follow at residues 576-601 and 613-638; these read TQLN…QKNE and RRLT…RFNE.

This sequence belongs to the phosphatase and actin regulator family. As to quaternary structure, binds ppp1ca and actin.

The protein localises to the cytoplasm. The protein resides in the cell projection. It localises to the lamellipodium. In terms of biological role, regulator of protein phosphatase 1 (PP1) required for neural tube and optic fissure closure, and enteric neural crest cell (ENCCs) migration during development. Acts as an activator of PP1. During neural tube closure, localizes to the ventral neural tube and activates PP1, leading to down-regulate cell proliferation within cranial neural tissue and the neural retina. Also acts as a regulator of migration of enteric neural crest cells (ENCCs) by activating PP1, leading to repression of the integrin signaling through the rho/rock pathway. The sequence is that of Phosphatase and actin regulator 4-A (phactr4-a) from Xenopus laevis (African clawed frog).